Here is a 460-residue protein sequence, read N- to C-terminus: ATP synthase subunit beta (460 aa).

150 to 157 (GGAGVGKT) is a binding site for ATP.

It belongs to the ATPase alpha/beta chains family. F-type ATPases have 2 components, CF(1) - the catalytic core - and CF(0) - the membrane proton channel. CF(1) has five subunits: alpha(3), beta(3), gamma(1), delta(1), epsilon(1). CF(0) has three main subunits: a(1), b(2) and c(9-12). The alpha and beta chains form an alternating ring which encloses part of the gamma chain. CF(1) is attached to CF(0) by a central stalk formed by the gamma and epsilon chains, while a peripheral stalk is formed by the delta and b chains.

Its subcellular location is the cell inner membrane. It carries out the reaction ATP + H2O + 4 H(+)(in) = ADP + phosphate + 5 H(+)(out). Functionally, produces ATP from ADP in the presence of a proton gradient across the membrane. The catalytic sites are hosted primarily by the beta subunits. The sequence is that of ATP synthase subunit beta from Pectobacterium carotovorum subsp. carotovorum (strain PC1).